The following is a 70-amino-acid chain: Putative defensin-like protein 280 (70 aa).

An N-terminal signal peptide occupies residues 1–23 (MASIKHFFLVFICVSVLLTSGLA). 3 cysteine pairs are disulfide-bonded: Cys-30-Cys-53, Cys-39-Cys-65, and Cys-43-Cys-67.

Belongs to the DEFL family.

The protein resides in the secreted. The polypeptide is Putative defensin-like protein 280 (Arabidopsis thaliana (Mouse-ear cress)).